A 234-amino-acid chain; its full sequence is Large ribosomal subunit protein uL1 (234 aa).

It belongs to the universal ribosomal protein uL1 family. Part of the 50S ribosomal subunit.

Its function is as follows. Binds directly to 23S rRNA. The L1 stalk is quite mobile in the ribosome, and is involved in E site tRNA release. Functionally, protein L1 is also a translational repressor protein, it controls the translation of the L11 operon by binding to its mRNA. The sequence is that of Large ribosomal subunit protein uL1 from Desulfatibacillum aliphaticivorans.